The primary structure comprises 231 residues: Extracellular deoxyribonuclease (231 aa).

An N-terminal signal peptide occupies residues 1-20 (MMIFRFVTTLAASLPLLTFA).

It belongs to the EndA/NucM nuclease family.

The protein resides in the secreted. The protein is Extracellular deoxyribonuclease (dns) of Vibrio cholerae serotype O1 (strain ATCC 39315 / El Tor Inaba N16961).